Consider the following 183-residue polypeptide: Capsid protein (183 aa).

Residues 136–183 (NAPILSTLPETTVVRRRGRSPRRRTPSPRRRRSQSPRRRRSQSRESQC) form a disordered region. The segment covering 149–176 (VRRRGRSPRRRTPSPRRRRSQSPRRRRS) has biased composition (basic residues). Phosphoserine; by host occurs at positions 155, 162, and 170. A 1; half-length repeat occupies 155–161 (SPRRRTP). Residues 155–177 (SPRRRTPSPRRRRSQSPRRRRSQ) form a 3 X 8 AA repeats of S-P-R-R-R-[PR]-S-Q region. A Bipartite nuclear localization signal motif is present at residues 158–175 (RRTPSPRRRRSQSPRRRR). Tandem repeats lie at residues 162-169 (SPRRRRSQ) and 170-177 (SPRRRRSQ). The segment at 177-183 (QSRESQC) is RNA binding.

Belongs to the orthohepadnavirus core antigen family. In terms of assembly, homodimerizes, then multimerizes. Interacts with cytosol exposed regions of viral L glycoprotein present in the reticulum-to-Golgi compartment. Interacts with human FLNB. Phosphorylated form interacts with host importin alpha; this interaction depends on the exposure of the NLS, which itself depends upon genome maturation and/or phosphorylation of the capsid protein. Interacts with host NUP153. Post-translationally, phosphorylated by host SRPK1, SRPK2, and maybe protein kinase C or GAPDH. Phosphorylation is critical for pregenomic RNA packaging. Protein kinase C phosphorylation is stimulated by HBx protein and may play a role in transport of the viral genome to the nucleus at the late step during the viral replication cycle.

The protein resides in the virion. The protein localises to the host cytoplasm. In terms of biological role, self assembles to form an icosahedral capsid. Most capsids appear to be large particles with an icosahedral symmetry of T=4 and consist of 240 copies of capsid protein, though a fraction forms smaller T=3 particles consisting of 180 capsid proteins. Entering capsids are transported along microtubules to the nucleus. Phosphorylation of the capsid is thought to induce exposure of nuclear localization signal in the C-terminal portion of the capsid protein that allows binding to the nuclear pore complex via the importin (karyopherin-) alpha and beta. Capsids are imported in intact form through the nuclear pore into the nuclear basket, where it probably binds NUP153. Only capsids that contain the mature viral genome can release the viral DNA and capsid protein into the nucleoplasm. Immature capsids get stuck in the basket. Capsids encapsulate the pre-genomic RNA and the P protein. Pre-genomic RNA is reverse-transcribed into DNA while the capsid is still in the cytoplasm. The capsid can then either be directed to the nucleus, providing more genomes for transcription, or bud through the endoplasmic reticulum to provide new virions. The sequence is that of Capsid protein from Homo sapiens (Human).